The chain runs to 119 residues: Large ribosomal subunit protein uL22 (119 aa).

It belongs to the universal ribosomal protein uL22 family. Part of the 50S ribosomal subunit.

This protein binds specifically to 23S rRNA; its binding is stimulated by other ribosomal proteins, e.g. L4, L17, and L20. It is important during the early stages of 50S assembly. It makes multiple contacts with different domains of the 23S rRNA in the assembled 50S subunit and ribosome. Its function is as follows. The globular domain of the protein is located near the polypeptide exit tunnel on the outside of the subunit, while an extended beta-hairpin is found that lines the wall of the exit tunnel in the center of the 70S ribosome. The sequence is that of Large ribosomal subunit protein uL22 from Rickettsia conorii (strain ATCC VR-613 / Malish 7).